The chain runs to 344 residues: Dihydroorotate dehydrogenase (quinone) (344 aa).

Residues 65-69 (AGLDK) and T89 each bind FMN. K69 is a binding site for substrate. 114–118 (NRMGF) is a binding site for substrate. Residues N145 and N178 each coordinate FMN. Residue N178 participates in substrate binding. S181 acts as the Nucleophile in catalysis. A substrate-binding site is contributed by N183. Residues K223 and T251 each coordinate FMN. 252-253 (NT) serves as a coordination point for substrate. Residues G274, G303, and 324 to 325 (YS) each bind FMN.

The protein belongs to the dihydroorotate dehydrogenase family. Type 2 subfamily. Monomer. Requires FMN as cofactor.

The protein resides in the cell membrane. The enzyme catalyses (S)-dihydroorotate + a quinone = orotate + a quinol. The protein operates within pyrimidine metabolism; UMP biosynthesis via de novo pathway; orotate from (S)-dihydroorotate (quinone route): step 1/1. Its function is as follows. Catalyzes the conversion of dihydroorotate to orotate with quinone as electron acceptor. In Cupriavidus taiwanensis (strain DSM 17343 / BCRC 17206 / CCUG 44338 / CIP 107171 / LMG 19424 / R1) (Ralstonia taiwanensis (strain LMG 19424)), this protein is Dihydroorotate dehydrogenase (quinone).